The following is a 404-amino-acid chain: Cysteine desulfurase IscS (404 aa).

Residues 75-76 (AT), Asn155, Gln183, and 203-205 (SGH) each bind pyridoxal 5'-phosphate. Lys206 bears the N6-(pyridoxal phosphate)lysine mark. Thr243 is a binding site for pyridoxal 5'-phosphate. Cys328 acts as the Cysteine persulfide intermediate in catalysis. Residue Cys328 coordinates [2Fe-2S] cluster.

It belongs to the class-V pyridoxal-phosphate-dependent aminotransferase family. NifS/IscS subfamily. Homodimer. Forms a heterotetramer with IscU, interacts with other sulfur acceptors. The cofactor is pyridoxal 5'-phosphate.

It localises to the cytoplasm. The enzyme catalyses (sulfur carrier)-H + L-cysteine = (sulfur carrier)-SH + L-alanine. It participates in cofactor biosynthesis; iron-sulfur cluster biosynthesis. Functionally, master enzyme that delivers sulfur to a number of partners involved in Fe-S cluster assembly, tRNA modification or cofactor biosynthesis. Catalyzes the removal of elemental sulfur atoms from cysteine to produce alanine. Functions as a sulfur delivery protein for Fe-S cluster synthesis onto IscU, an Fe-S scaffold assembly protein, as well as other S acceptor proteins. This chain is Cysteine desulfurase IscS, found in Klebsiella pneumoniae (strain 342).